The primary structure comprises 180 residues: Large ribosomal subunit protein uL5 (180 aa).

Belongs to the universal ribosomal protein uL5 family. Part of the 50S ribosomal subunit; part of the 5S rRNA/L5/L18/L25 subcomplex. Contacts the 5S rRNA and the P site tRNA. Forms a bridge to the 30S subunit in the 70S ribosome.

Functionally, this is one of the proteins that bind and probably mediate the attachment of the 5S RNA into the large ribosomal subunit, where it forms part of the central protuberance. In the 70S ribosome it contacts protein S13 of the 30S subunit (bridge B1b), connecting the 2 subunits; this bridge is implicated in subunit movement. Contacts the P site tRNA; the 5S rRNA and some of its associated proteins might help stabilize positioning of ribosome-bound tRNAs. This Xanthomonas axonopodis pv. citri (strain 306) protein is Large ribosomal subunit protein uL5.